We begin with the raw amino-acid sequence, 341 residues long: Serpentine receptor class epsilon-8 (341 aa).

7 helical membrane passes run 37–57 (VGFL…FIFI), 64–86 (LTFL…CIIV), 101–123 (WILV…LPIF), 143–163 (IWVS…SAIA), 169–189 (IPVV…YIGI), 235–255 (VQIS…MDHF), and 264–284 (WSYV…PIIL).

It belongs to the nematode receptor-like protein sre family.

The protein localises to the membrane. The sequence is that of Serpentine receptor class epsilon-8 (sre-8) from Caenorhabditis elegans.